The chain runs to 402 residues: Dynactin subunit 2 (402 aa).

Residues 1–26 form a disordered region; sequence MADPKYADLPGIARNEPDVYETSDLP. 2 coiled-coil regions span residues 101-132 and 357-402; these read PQQR…SAAE and VHLD…KRLQ.

The protein belongs to the dynactin subunit 2 family. Subunit of dynactin, a multiprotein complex part of a tripartite complex with dynein and a adapter, such as BICDL1, BICD2 or HOOK3. The dynactin complex is built around ACTR1A/ACTB filament and consists of an actin-related filament composed of a shoulder domain, a pointed end and a barbed end. Its length is defined by its flexible shoulder domain. The soulder is composed of 2 DCTN1 subunits, 4 DCTN2 and 2 DCTN3.

The protein localises to the cytoplasm. Its subcellular location is the cytoskeleton. It localises to the microtubule organizing center. It is found in the centrosome. The protein resides in the membrane. Part of the dynactin complex that activates the molecular motor dynein for ultra-processive transport along microtubules. In the dynactin soulder domain, binds the ACTR1A filament and acts as a molecular ruler to determine the length. Modulates cytoplasmic dynein binding to an organelle, and plays a role in prometaphase chromosome alignment and spindle organization during mitosis. Involved in anchoring microtubules to centrosomes. The chain is Dynactin subunit 2 (DCTN2) from Gallus gallus (Chicken).